Here is a 196-residue protein sequence, read N- to C-terminus: Probable peptidyl-prolyl cis-trans isomerase (196 aa).

An N-terminal signal peptide occupies residues 1 to 26; sequence MSFIRSALAAAAFVALSIGAVQTASA. The PPIase cyclophilin-type domain maps to 29 to 194; it reads PENTVILKLK…KIIKATIEAD (166 aa).

It belongs to the cyclophilin-type PPIase family.

It localises to the periplasm. It carries out the reaction [protein]-peptidylproline (omega=180) = [protein]-peptidylproline (omega=0). Functionally, PPIases accelerate the folding of proteins. It catalyzes the cis-trans isomerization of proline imidic peptide bonds in oligopeptides. The sequence is that of Probable peptidyl-prolyl cis-trans isomerase (ppi) from Brucella melitensis biotype 1 (strain ATCC 23456 / CCUG 17765 / NCTC 10094 / 16M).